The chain runs to 335 residues: MAAAEPTSSAQPTPQAQAQPPPHGAPSSQPSAALAGGSSRHEKSLGLLTTKFVSLLQEAQDGVLDLKAAADTLAVRQKRRIYDITNVLEGIDLIEKKSKNSIQWKGVGAGCNTKEVIDRLRCLKAEIEDLELKERELDQQKLWLQQSIKNVMEDSINNRFSYVTHEDICNCFHGDTLLAIQAPSGTQLEVPIPEMGQNGQKKYQINLKSHSGPIHVLLINKESSSSKPVVFPVPPPDDLTQPSSQSSTSVTPQKSTMAAQNLPEQHVSERSQTFQQTPAAEVSSGSISGDIIDELMSSDVFPLLRLSPTPADDYNFNLDDNEGVCDLFDVQILNY.

Residues 1-18 (MAAAEPTSSAQPTPQAQA) show a composition bias toward low complexity. Positions 1–40 (MAAAEPTSSAQPTPQAQAQPPPHGAPSSQPSAALAGGSSR) are disordered. The DNA-binding element occupies 37–108 (GSSRHEKSLG…KNSIQWKGVG (72 aa)). Residues 66 to 88 (LKAAADTLAVRQKRRIYDITNVL) form a leucine-zipper region. Residues 71–108 (DTLAVRQKRRIYDITNVLEGIDLIEKKSKNSIQWKGVG) carry the DEF box motif. The segment at 109 to 205 (AGCNTKEVID…GQNGQKKYQI (97 aa)) is dimerization. Positions 226-285 (SKPVVFPVPPPDDLTQPSSQSSTSVTPQKSTMAAQNLPEQHVSERSQTFQQTPAAEVSSG) are disordered. Positions 238–256 (DLTQPSSQSSTSVTPQKST) are enriched in low complexity. Positions 277–335 (TPAAEVSSGSISGDIIDELMSSDVFPLLRLSPTPADDYNFNLDDNEGVCDLFDVQILNY) are transactivation. The RBL2 association stretch occupies residues 312 to 329 (DDYNFNLDDNEGVCDLFD).

This sequence belongs to the E2F/DP family. Component of the DRTF1/E2F transcription factor complex. Binds cooperatively with DP-1 to E2F sites. Interaction with retinoblastoma protein RB1 or proteins RBL1 and RBL2 inhibits the E2F transactivation domain. Component of the DREAM complex (also named LINC complex) at least composed of E2F4, E2F5, LIN9, LIN37, LIN52, LIN54, MYBL1, MYBL2, RBL1, RBL2, RBBP4, TFDP1 and TFDP2. The complex exists in quiescent cells where it represses cell cycle-dependent genes. It dissociates in S phase when LIN9, LIN37, LIN52 and LIN54 form a subcomplex that binds to MYBL2.

Its subcellular location is the nucleus. Functionally, transcriptional activator that binds to E2F sites, these sites are present in the promoter of many genes whose products are involved in cell proliferation. May mediate growth factor-initiated signal transduction. It is likely involved in the early responses of resting cells to growth factor stimulation. Specifically required for multiciliate cell differentiation: together with MCIDAS and E2F5, binds and activate genes required for centriole biogenesis. This is Transcription factor E2F5 (E2f5) from Mus musculus (Mouse).